A 212-amino-acid polypeptide reads, in one-letter code: ATP phosphoribosyltransferase 2 (212 aa).

The protein belongs to the ATP phosphoribosyltransferase family. Short subfamily. In terms of assembly, heteromultimer composed of HisG and HisZ subunits.

It localises to the cytoplasm. It carries out the reaction 1-(5-phospho-beta-D-ribosyl)-ATP + diphosphate = 5-phospho-alpha-D-ribose 1-diphosphate + ATP. It functions in the pathway amino-acid biosynthesis; L-histidine biosynthesis; L-histidine from 5-phospho-alpha-D-ribose 1-diphosphate: step 1/9. Catalyzes the condensation of ATP and 5-phosphoribose 1-diphosphate to form N'-(5'-phosphoribosyl)-ATP (PR-ATP). Has a crucial role in the pathway because the rate of histidine biosynthesis seems to be controlled primarily by regulation of HisG enzymatic activity. This chain is ATP phosphoribosyltransferase 2 (hisG2), found in Geobacter sulfurreducens (strain ATCC 51573 / DSM 12127 / PCA).